Reading from the N-terminus, the 524-residue chain is MTTTPKSEQDRVIIFDTTLRDGEQCPGATMTFEEKLNVARMLDDMGVDVIEAGYPFASDGDFEAVHEIAKRSKNSVICGLSRASHKDIDRCAEAIKPAERGRIHTFLSTSPVHMKYKLQMEAAQVYEMVISSVTRARNHTDDVEWSAEDATRTEFDFLCRCIEAAIKAGATTINLPDTVGYAVPEEYREMFRKVRETVPNSDKARFSVHCHNDLGMAVANSMAGVAGGARQIECTINGIGERAGNAALEELVMAMRVRQDKLPYWNNIETTMLTHASKTVSAATSFPVQYNKAIVGRNAFAHESGIHQDGMIKNAQTYEIMTPETVGVKGTSLVMGKHSGRAGLIHKLEELGYKLSRNQIEDVFVRFKALADRKKDVYDEDIEALVDEQLLHGQDQIKLNSLTVIAGTHGPQRATMKLDVDGQIRIEEAEGNGPVDAVFNCIKALVPHDAKLELYQVHAVTEGTDAQAEVSVRLSHEGRSMTARAADPDTLVASAKAYLGALNKIVAKRQRDVREAVPAVAAAG.

Positions 12–274 constitute a Pyruvate carboxyltransferase domain; it reads VIIFDTTLRD…WNNIETTMLT (263 aa). Positions 21, 209, 211, and 245 each coordinate Mn(2+). Positions 398-524 are regulatory domain; sequence KLNSLTVIAG…EAVPAVAAAG (127 aa).

It belongs to the alpha-IPM synthase/homocitrate synthase family. LeuA type 1 subfamily. In terms of assembly, homodimer. The cofactor is Mn(2+).

The protein localises to the cytoplasm. The enzyme catalyses 3-methyl-2-oxobutanoate + acetyl-CoA + H2O = (2S)-2-isopropylmalate + CoA + H(+). It participates in amino-acid biosynthesis; L-leucine biosynthesis; L-leucine from 3-methyl-2-oxobutanoate: step 1/4. Catalyzes the condensation of the acetyl group of acetyl-CoA with 3-methyl-2-oxobutanoate (2-ketoisovalerate) to form 3-carboxy-3-hydroxy-4-methylpentanoate (2-isopropylmalate). The polypeptide is 2-isopropylmalate synthase (Rhodopseudomonas palustris (strain HaA2)).